Here is a 6684-residue protein sequence, read N- to C-terminus: Replicase polyprotein 1ab (6684 aa).

The CoV Nsp1 globular domain maps to 2–108 (SSKQFKILVN…DFDLKIARTG (107 aa)). The CoV Nsp2 N-terminal domain maps to 111–349 (AIYVDQYMCG…KSLVACSVKR (239 aa)). Residues Cys240, Cys242, Cys259, and Cys260 each contribute to the Zn(2+) site. The segment at 240–260 (CPCGSESSGVGDWTGFKTACC) is C4. In terms of domain architecture, CoV Nsp2 middle spans 378–773 (NVGLLFKKTP…CNAARNDIEI (396 aa)). One can recognise a CoV Nsp2 C-terminal domain in the interval 768–879 (RNDIEIGGIP…VQRMYNKMGG (112 aa)). One can recognise a Ubiquitin-like 1 domain in the interval 882–983 (KTVSFSEEVD…DGIMISQYDI (102 aa)). The disordered stretch occupies residues 989–1032 (EKSEVSASSEEEEVESVEEDPENEIVEASEGAEGTSSQEEVETV). Residues 997–1015 (SEEEEVESVEEDPENEIVE) are compositionally biased toward acidic residues. The Peptidase C16 1 domain maps to 1055–1299 (PWAAAVDVQE…FKVEKVEQQP (245 aa)). Cys1093 acts as the For PL1-PRO activity in catalysis. A C4-type 1; degenerate zinc finger spans residues 1164–1195 (CGCGEKEIVLERAVFKLTPLKESFNYGVCGDC). Catalysis depends on for PL1-PRO activity residues His1244 and Asp1257. The Macro domain maps to 1318-1489 (NDDLILPFYK…TIENFFSCSI (172 aa)). The Ubiquitin-like 2 domain occupies 1486-1542 (SCSIPVNVTEDNVNHERVSVSFDKTYGEQLKGTVVIKDKDVTNQLPSAFDVGQKVIK). Residues 1550 to 1803 (AHYGFRDAAA…KVAASPKIVQ (254 aa)) enclose the Peptidase C16 2 domain. Cys1588 functions as the For PL2-PRO activity in the catalytic mechanism. Zn(2+) is bound by residues Cys1667, Cys1670, Cys1694, and His1696. The C4-type 2; atypical zinc-finger motif lies at 1667–1696 (CDKCAKVEKFVGPVVAAPLAIHGTDETCVH). Active-site for PL2-PRO activity residues include His1741 and Asp1754. A helical transmembrane segment spans residues 1896–1916 (LVLLLIAIYNFFYLFVSIPVV). Residues 1896-2053 (LVLLLIAIYN…LALKHIVFAC (158 aa)) form an HD1 region. The 3Ecto domain occupies 1905–1970 (NFFYLFVSIP…LQVTWDFKSD (66 aa)). Disulfide bonds link Cys1921-Cys1948 and Cys1939-Cys1945. 2 helical membrane-spanning segments follow: residues 1995-2015 (CFLM…FGYV) and 2033-2053 (FVIV…VFAC). Positions 2044-2134 (LALKHIVFAC…SVKQTVYATD (91 aa)) are Y1. The 341-residue stretch at 2044–2384 (LALKHIVFAC…PYERFTESVS (341 aa)) folds into the CoV Nsp3 Y domain. Positions 2048, 2053, 2058, 2061, 2094, 2097, 2101, and 2104 each coordinate Zn(2+). The segment at 2048-2061 (HIVFACSNPSCKTC) is ZF1. A ZF2 region spans residues 2094–2104 (CKKHNFYCKNC). Positions 2135 to 2224 (RSHQEVTKVE…IVNSDLLEDL (90 aa)) are Y2. The tract at residues 2135–2384 (RSHQEVTKVE…PYERFTESVS (250 aa)) is coV-Y. The Y3 stretch occupies residues 2225-2281 (SVDFKGALFNAKKNVIKNSFNVDVSECKNLDECYRACNLNVSFSTFEMAVNNAHRFG). A Y4 region spans residues 2282 to 2384 (ILITDRSFNN…PYERFTESVS (103 aa)). 8 consecutive transmembrane segments (helical) span residues 2401–2421 (IVIL…YSVA), 2467–2487 (YGFI…VFDL), 2497–2517 (PAYV…AFGV), 2538–2558 (CVFN…VYCA), 2666–2686 (GAML…YGVL), 2695–2715 (CTFL…SYFV), 2721–2741 (FMII…YPGI), and 2746–2766 (FIIA…ILVF). The HD2 stretch occupies residues 2401–2766 (IVILVFVFIF…YVITAYILVF (366 aa)). In terms of domain architecture, Nsp4C spans 2783–2878 (LFEGDKFVGN…PTVSVNSTLQ (96 aa)). In terms of domain architecture, Peptidase C30 spans 2879 to 3180 (SGLRKMAQPS…IRQMYGVNLQ (302 aa)). Residues His2919 and Cys3022 each act as for 3CL-PRO activity in the active site. The next 8 helical transmembrane spans lie at 3187–3207 (FFYP…EFFM), 3217–3237 (TFVS…VSGI), 3242–3262 (LFFM…NLFW), 3280–3300 (MFLP…IVFV), 3313–3333 (WFSL…IFGT), 3347–3367 (FVNM…VVIA), 3371–3391 (IAYY…FGFM), and 3394–3414 (ISIV…ILYW). Positions 3187–3414 (FFYPIMTAMT…FCCYYGILYW (228 aa)) are HD3. The RdRp Nsp7 cofactor domain occupies 3475 to 3557 (SKLTEMKCTN…SYFENTTILQ (83 aa)). The RdRp Nsp8 cofactor domain occupies 3558–3752 (SVASAYAALP…ITCERTTKLQ (195 aa)). Residues 3753–3863 (NNEIMPGKLK…GYIGATVRLQ (111 aa)) enclose the Nsp9 ssRNA-binding domain. The 141-residue stretch at 3864–4004 (AGKPTEHPSN…TSMQSFTVDQ (141 aa)) folds into the ExoN/MTase coactivator domain. Zn(2+) contacts are provided by Cys3937, Cys3940, His3946, Cys3953, Cys3979, Cys3982, Cys3990, and Cys3992. Zinc fingers lie at residues 3937-3953 (CIYC…DGLC) and 3979-3992 (CVVC…GCMC). A NiRAN domain is found at 4006 to 4255 (YLNRVRGSSA…ESENFVKSDI (250 aa)). One can recognise a Nsp12 Interface domain in the interval 4261–4359 (KQYDLLAYDF…WNLDVKLDTM (99 aa)). Residues His4290, Cys4296, Cys4301, Cys4305, and Cys4482 each contribute to the Zn(2+) site. In terms of domain architecture, Nsp12 RNA-dependent RNA polymerase spans 4360 to 4927 (KLSMTDLLRF…SLYEKSTVLQ (568 aa)). Residues 4362-4576 (SMTDLLRFVT…HQKHLKSIAA (215 aa)) are rdRp Fingers N-ter. Residues 4577–4615 (TRNATVVIGSTKFYGGWDNMLKNLMRDVDNGCLMGWDYP) are rdRp Palm N-ter. The RdRp catalytic domain occupies 4607–4769 (GCLMGWDYPK…CYNKDYADLG (163 aa)). The rdRp Fingers C-ter stretch occupies residues 4616 to 4674 (KCDRALPNMIRMASAMILGSKHVGCCTHNDRFYRLSNELAQVLTEVVHCTGGFYFKPGG). His4637, Cys4640, and Cys4641 together coordinate Zn(2+). Positions 4675–4810 (TTSGDGTTAY…SVGPHEFCSQ (136 aa)) are rdRp Palm C-ter. Catalysis depends on residues Ser4754, Asp4755, and Asp4756. Residues 4811–4927 (HTLQIVGPDG…SLYEKSTVLQ (117 aa)) are rdRp Thumb. The CV ZBD domain maps to 4928–5040 (AAGMCVVCGS…EDFNKLAVSD (113 aa)). Zn(2+)-binding residues include Cys4932, Cys4935, Cys4943, Cys4946, Cys4953, Cys4956, His4960, His4966, Cys4977, Cys4982, Cys4999, and His5002. Residues 5175–5366 (NTISKLYPVF…MCTLGPDVFL (192 aa)) enclose the (+)RNA virus helicase ATP-binding domain. 5210 to 5217 (GPPGSGKS) provides a ligand contact to ATP. The region spanning 5367–5536 (HKCYRCPAEI…AKPETCGLFK (170 aa)) is the (+)RNA virus helicase C-terminal domain. Positions 5598–5812 (LFCTRDFAMR…RCLAIHDCFV (215 aa)) constitute an ExoN domain. Active-site residues include Asp5616, Glu5618, and Glu5717. 7 residues coordinate Zn(2+): Cys5733, Cys5735, Cys5751, His5754, His5782, Cys5786, and His5789. Catalysis depends on residues His5793 and Asp5798. Cys5804 contributes to the Zn(2+) binding site. Residues 5821–6042 (YPFIDNEEKI…MLWHGFVNSK (222 aa)) form the N7-MTase domain. 5856 to 5862 (DVGNPKG) lines the S-adenosyl-L-methionine pocket. A gpppA-binding region spans residues 5933-5947 (CNGGALYVNNHAFHT). Cys5971, Cys5988, Cys5999, and His6002 together coordinate Zn(2+). A Nsp15 N-terminal oligomerization domain is found at 6046–6106 (SLENVAFNVV…NVAFELYAKR (61 aa)). An AV-Nsp11N/CoV-Nsp15M domain is found at 6107 to 6224 (KLGLTPPLTI…IYVRKNGEYV (118 aa)). Residues 6241–6381 (KPRSTMEEDF…ENSHIKTFYP (141 aa)) enclose the NendoU domain. Active-site residues include His6271, His6286, Lys6327, Lys6429, Asp6513, Lys6553, and Glu6586. Residues 6385 to 6681 (SAEWNPGYSM…KLLNFGNHFV (297 aa)) enclose the Nidovirus-type SAM-dependent 2'-O-MTase domain.

Belongs to the coronaviruses polyprotein 1ab family. As to quaternary structure, 3CL-PRO exists as monomer and homodimer. Eight copies of nsp7 and eight copies of nsp8 assemble to form a heterohexadecamer. Nsp9 is a dimer. Nsp10 forms a dodecamer. Requires Mn(2+) as cofactor. Specific enzymatic cleavages in vivo by its own proteases yield mature proteins. 3CL-PRO is autocatalytically processed.

The protein resides in the host membrane. It is found in the host cytoplasm. It localises to the host perinuclear region. The protein localises to the host endoplasmic reticulum-Golgi intermediate compartment. The catalysed reaction is Thiol-dependent hydrolysis of ester, thioester, amide, peptide and isopeptide bonds formed by the C-terminal Gly of ubiquitin (a 76-residue protein attached to proteins as an intracellular targeting signal).. It carries out the reaction RNA(n) + a ribonucleoside 5'-triphosphate = RNA(n+1) + diphosphate. It catalyses the reaction ATP + H2O = ADP + phosphate + H(+). The enzyme catalyses a 5'-end diphospho-ribonucleoside in mRNA + GTP + H(+) = a 5'-end (5'-triphosphoguanosine)-ribonucleoside in mRNA + diphosphate. The catalysed reaction is a 5'-end (N(7)-methyl 5'-triphosphoguanosine)-ribonucleoside in mRNA + S-adenosyl-L-methionine = a 5'-end (N(7)-methyl 5'-triphosphoguanosine)-(2'-O-methyl-ribonucleoside) in mRNA + S-adenosyl-L-homocysteine + H(+). It carries out the reaction uridylyl-uridylyl-ribonucleotide-RNA = a 3'-end uridylyl-2',3'-cyclophospho-uridine-RNA + a 5'-end dephospho-ribonucleoside-RNA. Its function is as follows. The replicase polyprotein of coronaviruses is a multifunctional protein: it contains the activities necessary for the transcription of negative stranded RNA, leader RNA, subgenomic mRNAs and progeny virion RNA as well as proteinases responsible for the cleavage of the polyprotein into functional products. Functionally, non-structural protein 1 inhibits host translation. By suppressing host gene expression, nsp1 facilitates efficient viral gene expression in infected cells and evasion from host immune response. In terms of biological role, the papain-like proteinase 1 (PLP1) and papain-like proteinase 2 (PLP2) are responsible for the cleavages located at the N-terminus of the replicase polyprotein. In addition, PLP2 possesses a deubiquitinating/deISGylating activity and processes both 'Lys-48'- and 'Lys-63'-linked polyubiquitin chains from cellular substrates. PLP2 also antagonizes innate immune induction of type I interferon by blocking the nuclear translocation of host IRF-3. Responsible for the majority of cleavages as it cleaves the C-terminus of replicase polyprotein at 11 sites. Recognizes substrates containing the core sequence [ILMVF]-Q-|-[SAGC]. Inhibited by the substrate-analog Cbz-Val-Asn-Ser-Thr-Leu-Gln-CMK. Its function is as follows. The helicase which contains a zinc finger structure displays RNA and DNA duplex-unwinding activities with 5' to 3' polarity. ATPase activity is strongly stimulated by poly(U), poly(dT), poly(C), poly(dA), but not by poly(G). Functionally, the exoribonuclease acts on both ssRNA and dsRNA in a 3' to 5' direction. In terms of biological role, nsp7-nsp8 hexadecamer may possibly confer processivity to the polymerase, maybe by binding to dsRNA or by producing primers utilized by the latter. Forms a primer, NSP9-pU, which is utilized by the polymerase for the initiation of RNA chains. Interacts with ribosome signal recognition particle RNA (SRP). Together with NSP8, suppress protein integration into the cell membrane, thereby disrupting host immune defenses. Its function is as follows. RNA-directed RNA polymerase that catalyzes the transcription of viral genomic and subgenomic RNAs. Acts in complex with nsp7 and nsp8 to transcribe both the minus and positive strands of genomic RNA. The kinase-like NiRAN domain of NSP12 attaches one or more nucleotides to the amino terminus of NSP9, forming a covalent RNA-protein intermediate that serves as transcription/replication primer. Subgenomic RNAs (sgRNAs) are formed by discontinuous transcription: The polymerase has the ability to pause at transcription-regulating sequences (TRS) and jump to the leader TRS, resulting in a major deletion. This creates a series of subgenomic RNAs that are replicated, transcribed and translated. In addition, Nsp12 is a subunit of the viral RNA capping enzyme that catalyzes the RNA guanylyltransferase reaction for genomic and sub-genomic RNAs. Subsequently, the NiRAN domain transfers RNA to GDP, and forms the core cap structure GpppA-RNA. Functionally, plays a role in viral transcription/replication and prevents the simultaneous activation of host cell dsRNA sensors, such as MDA5/IFIH1, OAS, and PKR. Acts by degrading the 5'-polyuridines generated during replication of the poly(A) region of viral genomic and subgenomic RNAs. Catalyzes a two-step reaction in which a 2'3'-cyclic phosphate (2'3'-cP) is first generated by 2'-O transesterification, which is then hydrolyzed to a 3'-phosphate (3'-P). If not degraded, poly(U) RNA would hybridize with poly(A) RNA tails and activate host dsRNA sensors. The protein is Replicase polyprotein 1ab (rep) of Sus scrofa (Pig).